The primary structure comprises 852 residues: Exported protein YdbA (852 aa).

Residues 1-21 form the signal peptide; that stretch reads MQRKTLLSACIALALSGQGWA. Disordered regions lie at residues 30–50, 91–145, 307–354, 407–449, and 506–531; these read TTGEKKNTNVTCPADPGKLSP, DDDH…FNND, TITN…QDGD, TNGG…KVIQ, and NGGTGTQINGNDATANNSGKTTVDGK. Residues 307 to 319 show a composition bias toward low complexity; it reads TITNGGTGTQING. A compositionally biased stretch (polar residues) spans 339 to 348; the sequence is GTEINGNNGK. Low complexity predominate over residues 506 to 516; the sequence is NGGTGTQINGN. Polar residues predominate over residues 517–526; sequence DATANNSGKT.

Its subcellular location is the secreted. Functionally, the full-length protein (which is about 2000 amino acids long) is part of the autotransporter family. This Escherichia coli (strain K12) protein is Exported protein YdbA (ydbA).